A 148-amino-acid chain; its full sequence is Glycine cleavage system H protein 5 (148 aa).

The Lipoyl-binding domain occupies 33 to 115 (VFTIGLTSVA…YGQGWIAKVK (83 aa)). Lysine 74 carries the post-translational modification N6-lipoyllysine.

The protein belongs to the GcvH family. As to quaternary structure, the glycine cleavage system is composed of four proteins: P, T, L and H. (R)-lipoate serves as cofactor.

In terms of biological role, the glycine cleavage system catalyzes the degradation of glycine. The H protein shuttles the methylamine group of glycine from the P protein to the T protein. The polypeptide is Glycine cleavage system H protein 5 (Aquifex aeolicus (strain VF5)).